Reading from the N-terminus, the 266-residue chain is Putative zinc finger protein 034R (266 aa).

The segment at 84-176 is disordered; it reads SPTKSVDKAA…GPKRDSTQQP (93 aa). Residues 88–100 are compositionally biased toward basic and acidic residues; sequence SVDKAAQKEKKMP. 2 stretches are compositionally biased toward polar residues: residues 105-119 and 160-176; these read KPTTVTPTRNEQGIL and GVSQQQQGPKRDSTQQP. The C3H1-type zinc-finger motif lies at 180–192; the sequence is CKSVLKQAKCYFG.

The protein belongs to the IIV-6 077L family.

This chain is Putative zinc finger protein 034R, found in Aedes vexans (Inland floodwater mosquito).